The primary structure comprises 445 residues: Putative H/ACA ribonucleoprotein complex subunit 4 (445 aa).

Residues 1 to 32 (MGKKDKRSKLEGDELAEAQQKGSFQLPSSNET) form a disordered region. Polar residues predominate over residues 20 to 32 (QKGSFQLPSSNET). The Nucleophile role is filled by Asp-113. A PUA domain is found at 284 to 359 (HKRVVVKDSC…IVAKSKRVIM (76 aa)). The disordered stretch occupies residues 407 to 445 (TDKVKKEQEDKEDEEEEEAPKKKSKKAAKKEVSSSSDSE).

This sequence belongs to the pseudouridine synthase TruB family. In terms of assembly, component of the small nucleolar ribonucleoprotein particle containing H/ACA-type snoRNAs (H/ACA snoRNPs).

The protein localises to the nucleus. Its subcellular location is the nucleolus. The enzyme catalyses a uridine in RNA = a pseudouridine in RNA. Its function is as follows. Plays a central role in ribosomal RNA processing. Probable catalytic subunit of H/ACA small nucleolar ribonucleoprotein (H/ACA snoRNP) complex, which catalyzes pseudouridylation of rRNA. This involves the isomerization of uridine such that the ribose is subsequently attached to C5, instead of the normal N1. Pseudouridine ('psi') residues may serve to stabilize the conformation of rRNAs. This Caenorhabditis briggsae protein is Putative H/ACA ribonucleoprotein complex subunit 4.